A 354-amino-acid polypeptide reads, in one-letter code: Ornithine transcarbamylase, mitochondrial (354 aa).

Residues 1–32 (MLSNLRILLNNAALRKGHTSVVRHFWCGKPVQ) constitute a mitochondrion transit peptide. K70 carries the post-translational modification N6-acetyllysine; alternate. Position 70 is an N6-succinyllysine; alternate (K70). An N6-succinyllysine modification is found at K80. An N6-acetyllysine; alternate modification is found at K88. K88 bears the N6-succinyllysine; alternate mark. 90 to 94 (STRTR) contributes to the carbamoyl phosphate binding site. S133 is modified (phosphoserine). A carbamoyl phosphate-binding site is contributed by R141. Residue R141 coordinates L-ornithine. K144 carries the post-translational modification N6-acetyllysine; alternate. The residue at position 144 (K144) is an N6-succinyllysine; alternate. Position 168 (H168) interacts with carbamoyl phosphate. Residue N199 participates in L-ornithine binding. N6-acetyllysine; alternate occurs at positions 221, 231, and 238. K221, K231, and K238 each carry N6-succinyllysine; alternate. K243 carries the post-translational modification N6-acetyllysine. 263-267 (DTWIS) is an L-ornithine binding site. An N6-succinyllysine mark is found at K274 and K289. Position 292 is an N6-acetyllysine; alternate (K292). Residue K292 is modified to N6-succinyllysine; alternate. Position 302 to 305 (302 to 305 (HCLP)) interacts with L-ornithine. The active site involves C303. Position 307 is an N6-acetyllysine; alternate (K307). Position 307 is an N6-succinyllysine; alternate (K307). Residue R330 participates in carbamoyl phosphate binding. R330 provides a ligand contact to L-ornithine.

It belongs to the aspartate/ornithine carbamoyltransferase superfamily. OTCase family. As to quaternary structure, homotrimer. In terms of processing, acetylation at Lys-88 negatively regulates ornithine carbamoyltransferase activity in response to nutrient signals.

Its subcellular location is the mitochondrion matrix. It carries out the reaction carbamoyl phosphate + L-ornithine = L-citrulline + phosphate + H(+). The protein operates within nitrogen metabolism; urea cycle; L-citrulline from L-ornithine and carbamoyl phosphate: step 1/1. Negatively regulated by lysine acetylation. Its function is as follows. Catalyzes the second step of the urea cycle, the condensation of carbamoyl phosphate with L-ornithine to form L-citrulline. The urea cycle ensures the detoxification of ammonia by converting it to urea for excretion. The sequence is that of Ornithine transcarbamylase, mitochondrial from Mus musculus (Mouse).